Reading from the N-terminus, the 270-residue chain is Acyl-[acyl-carrier-protein]--UDP-N-acetylglucosamine O-acyltransferase (270 aa).

It belongs to the transferase hexapeptide repeat family. LpxA subfamily. Homotrimer.

The protein resides in the cytoplasm. The catalysed reaction is a (3R)-hydroxyacyl-[ACP] + UDP-N-acetyl-alpha-D-glucosamine = a UDP-3-O-[(3R)-3-hydroxyacyl]-N-acetyl-alpha-D-glucosamine + holo-[ACP]. It functions in the pathway glycolipid biosynthesis; lipid IV(A) biosynthesis; lipid IV(A) from (3R)-3-hydroxytetradecanoyl-[acyl-carrier-protein] and UDP-N-acetyl-alpha-D-glucosamine: step 1/6. Involved in the biosynthesis of lipid A, a phosphorylated glycolipid that anchors the lipopolysaccharide to the outer membrane of the cell. The sequence is that of Acyl-[acyl-carrier-protein]--UDP-N-acetylglucosamine O-acyltransferase from Helicobacter acinonychis (strain Sheeba).